We begin with the raw amino-acid sequence, 148 residues long: MFRRPALQVLRQFVRHESEIASSLVLERSLNRVQLLGRVGQDPVMRQVEGKNPVTIFSLATNEMWRSGDNETYQMGDVSQKTTWHRISVFRPGLRDVAYQYVKKGSRIYVEGKVDYGEYMDKNNVRRQATTIIADNIVFLSDQTKEKA.

The N-terminal 16 residues, 1–16 (MFRRPALQVLRQFVRH), are a transit peptide targeting the mitochondrion. In terms of domain architecture, SSB spans 30 to 141 (LNRVQLLGRV…IIADNIVFLS (112 aa)). S67 and S79 each carry phosphoserine. Residue K113 is modified to N6-acetyllysine. K122 is subject to N6-succinyllysine.

Homotetramer. Interacts with MPG/AAG, through inhibition of its glycosylase activity it potentially prevents formation of DNA breaks in ssDNA, ensuring that base removal primarily occurs in dsDNA. Interacts with POLDIP2. Interacts with PRIMPOL.

The protein localises to the mitochondrion. Its subcellular location is the mitochondrion matrix. It localises to the mitochondrion nucleoid. Binds preferentially and cooperatively to pyrimidine rich single-stranded DNA (ss-DNA). In vitro, required to maintain the copy number of mitochondrial DNA (mtDNA) and plays a crucial role during mtDNA replication by stimulating the activity of the replisome components POLG and TWNK at the replication fork. Promotes the activity of the gamma complex polymerase POLG, largely by organizing the template DNA and eliminating secondary structures to favor ss-DNA conformations that facilitate POLG activity. In addition it is able to promote the 5'-3' unwinding activity of the mtDNA helicase TWNK. May also function in mtDNA repair. The polypeptide is Single-stranded DNA-binding protein, mitochondrial (SSBP1) (Oryctolagus cuniculus (Rabbit)).